Consider the following 142-residue polypeptide: FAD synthase (142 aa).

Residues 9–10 (VF), 14–17 (HLGH), Asp93, and Tyr120 each bind ATP.

This sequence belongs to the archaeal FAD synthase family. As to quaternary structure, homodimer. The cofactor is a divalent metal cation.

It catalyses the reaction FMN + ATP + H(+) = FAD + diphosphate. Its pathway is cofactor biosynthesis; FAD biosynthesis; FAD from FMN: step 1/1. Functionally, catalyzes the transfer of the AMP portion of ATP to flavin mononucleotide (FMN) to produce flavin adenine dinucleotide (FAD) coenzyme. This chain is FAD synthase (ribL), found in Thermoplasma volcanium (strain ATCC 51530 / DSM 4299 / JCM 9571 / NBRC 15438 / GSS1).